Consider the following 829-residue polypeptide: DNA ligase (829 aa).

Residues 1–23 (MPAQTSRARPVEEMTAAQAREAH) are disordered. NAD(+) contacts are provided by residues 47–51 (DAEYD), 96–97 (SL), and E130. K132 acts as the N6-AMP-lysine intermediate in catalysis. Residues R153, E190, K306, and K330 each coordinate NAD(+). Zn(2+) contacts are provided by C453, C456, C477, and C483. The region spanning 750 to 829 (AAAAVFSGQT…AEWLAMVEAA (80 aa)) is the BRCT domain.

Belongs to the NAD-dependent DNA ligase family. LigA subfamily. Mg(2+) serves as cofactor. Mn(2+) is required as a cofactor.

It catalyses the reaction NAD(+) + (deoxyribonucleotide)n-3'-hydroxyl + 5'-phospho-(deoxyribonucleotide)m = (deoxyribonucleotide)n+m + AMP + beta-nicotinamide D-nucleotide.. Functionally, DNA ligase that catalyzes the formation of phosphodiester linkages between 5'-phosphoryl and 3'-hydroxyl groups in double-stranded DNA using NAD as a coenzyme and as the energy source for the reaction. It is essential for DNA replication and repair of damaged DNA. This Methylobacterium nodulans (strain LMG 21967 / CNCM I-2342 / ORS 2060) protein is DNA ligase.